The primary structure comprises 321 residues: Malate dehydrogenase (321 aa).

Residues 10-15 (GSGMIG) and aspartate 34 each bind NAD(+). Substrate-binding residues include arginine 83 and arginine 89. NAD(+) contacts are provided by residues asparagine 96 and 119 to 121 (ITN). Residues asparagine 121 and arginine 152 each coordinate substrate. Histidine 176 serves as the catalytic Proton acceptor.

The protein belongs to the LDH/MDH superfamily. MDH type 3 family.

It catalyses the reaction (S)-malate + NAD(+) = oxaloacetate + NADH + H(+). Its function is as follows. Catalyzes the reversible oxidation of malate to oxaloacetate. This chain is Malate dehydrogenase, found in Bartonella bacilliformis (strain ATCC 35685 / KC583 / Herrer 020/F12,63).